Consider the following 58-residue polypeptide: Large ribosomal subunit protein uL30 (58 aa).

It belongs to the universal ribosomal protein uL30 family. As to quaternary structure, part of the 50S ribosomal subunit.

This chain is Large ribosomal subunit protein uL30, found in Phocaeicola vulgatus (strain ATCC 8482 / DSM 1447 / JCM 5826 / CCUG 4940 / NBRC 14291 / NCTC 11154) (Bacteroides vulgatus).